The following is a 331-amino-acid chain: Probable leucine carboxyl methyltransferase 1 (331 aa).

S-adenosyl-L-methionine-binding positions include Arg82, Gly107, Asp131, 179-180, and Glu206; that span reads DL.

This sequence belongs to the methyltransferase superfamily. LCMT family.

The catalysed reaction is [phosphatase 2A protein]-C-terminal L-leucine + S-adenosyl-L-methionine = [phosphatase 2A protein]-C-terminal L-leucine methyl ester + S-adenosyl-L-homocysteine. Its function is as follows. Methylates the carboxyl group of the C-terminal leucine residue of protein phosphatase 2A catalytic subunits to form alpha-leucine ester residues. The protein is Probable leucine carboxyl methyltransferase 1 of Caenorhabditis briggsae.